A 410-amino-acid polypeptide reads, in one-letter code: Peptide chain release factor subunit 1 (410 aa).

Belongs to the eukaryotic release factor 1 family. In terms of assembly, heterodimer of two subunits, one of which binds GTP.

The protein resides in the cytoplasm. Its function is as follows. Directs the termination of nascent peptide synthesis (translation) in response to the termination codons UAA, UAG and UGA. The chain is Peptide chain release factor subunit 1 from Picrophilus torridus (strain ATCC 700027 / DSM 9790 / JCM 10055 / NBRC 100828 / KAW 2/3).